The chain runs to 384 residues: UDP-4-amino-4-deoxy-L-arabinose--oxoglutarate aminotransferase (384 aa).

Lys182 carries the N6-(pyridoxal phosphate)lysine modification.

This sequence belongs to the DegT/DnrJ/EryC1 family. ArnB subfamily. In terms of assembly, homodimer. It depends on pyridoxal 5'-phosphate as a cofactor.

It catalyses the reaction UDP-4-amino-4-deoxy-beta-L-arabinose + 2-oxoglutarate = UDP-beta-L-threo-pentopyranos-4-ulose + L-glutamate. Its pathway is nucleotide-sugar biosynthesis; UDP-4-deoxy-4-formamido-beta-L-arabinose biosynthesis; UDP-4-deoxy-4-formamido-beta-L-arabinose from UDP-alpha-D-glucuronate: step 2/3. It functions in the pathway bacterial outer membrane biogenesis; lipopolysaccharide biosynthesis. In terms of biological role, catalyzes the conversion of UDP-4-keto-arabinose (UDP-Ara4O) to UDP-4-amino-4-deoxy-L-arabinose (UDP-L-Ara4N). The modified arabinose is attached to lipid A and is required for resistance to polymyxin and cationic antimicrobial peptides. The polypeptide is UDP-4-amino-4-deoxy-L-arabinose--oxoglutarate aminotransferase (Yersinia pseudotuberculosis serotype O:1b (strain IP 31758)).